The chain runs to 645 residues: Beta-galactosidase (645 aa).

Arg102 is a substrate binding site. Cys106 contributes to the Zn(2+) binding site. Residue Asn140 coordinates substrate. Glu141 (proton donor) is an active-site residue. Residues Cys150, Cys152, and Cys155 each contribute to the Zn(2+) site. The active-site Nucleophile is the Glu312. Substrate contacts are provided by residues Trp320 and 360–363; that span reads EQMH.

The protein belongs to the glycosyl hydrolase 42 family. Homotrimer.

It catalyses the reaction Hydrolysis of terminal non-reducing beta-D-galactose residues in beta-D-galactosides.. Its activity is regulated as follows. Inhibited by Cu(2+) and Fe(2+), and moderately activated by divalent cations such as Co(2+), Mn(2+) and Zn(2+). Considerably activated by dithiothreitol, beta-mercaptoethanol and cysteine. The sequence is that of Beta-galactosidase from Thermus thermophilus.